The primary structure comprises 388 residues: Lipid-A-disaccharide synthase (388 aa).

The protein belongs to the LpxB family.

It catalyses the reaction a lipid X + a UDP-2-N,3-O-bis[(3R)-3-hydroxyacyl]-alpha-D-glucosamine = a lipid A disaccharide + UDP + H(+). Its pathway is bacterial outer membrane biogenesis; LPS lipid A biosynthesis. Functionally, condensation of UDP-2,3-diacylglucosamine and 2,3-diacylglucosamine-1-phosphate to form lipid A disaccharide, a precursor of lipid A, a phosphorylated glycolipid that anchors the lipopolysaccharide to the outer membrane of the cell. The chain is Lipid-A-disaccharide synthase from Burkholderia mallei (strain ATCC 23344).